The chain runs to 150 residues: UPF0178 protein Bcen2424_1660 (150 aa).

This sequence belongs to the UPF0178 family.

The chain is UPF0178 protein Bcen2424_1660 from Burkholderia cenocepacia (strain HI2424).